The chain runs to 323 residues: rRNA 2'-O-methyltransferase fibrillarin (323 aa).

The segment at 1 to 78 is disordered; the sequence is MRPGFSPRGG…GGGRGGFGGG (78 aa). 2 stretches are compositionally biased toward gly residues: residues 7–44 and 63–78; these read PRGGRGGFGDRGGFGGRGGFGDRGGFRGGSRGGFGGRG and GRGGPRGGGRGGFGGG. Residues arginine 8, arginine 17, arginine 23, and arginine 29 each carry the asymmetric dimethylarginine modification. S-adenosyl-L-methionine-binding positions include 174 to 175, 193 to 194, 218 to 219, and 238 to 241; these read TT, EF, DA, and DVAQ. Residues 276–308 are helical; it reads APEAVFAAEVKKMQQENMKPQEQLTLEPYERDH.

This sequence belongs to the methyltransferase superfamily. Fibrillarin family. In terms of assembly, component of box C/D small nucleolar ribonucleoprotein (snoRNP) particles. Part of the small subunit (SSU) processome, composed of more than 70 proteins and the RNA chaperone small nucleolar RNA (snoRNA) U3. In terms of processing, by homology to other fibrillarins, some or all of the N-terminal domain arginines are modified to asymmetric dimethylarginine (DMA).

The protein resides in the nucleus. The protein localises to the nucleolus. It localises to the nucleoplasm. The enzyme catalyses L-glutaminyl-[histone H2A] + S-adenosyl-L-methionine = N(5)-methyl-L-glutaminyl-[histone H2A] + S-adenosyl-L-homocysteine + H(+). It carries out the reaction a ribonucleotide in rRNA + S-adenosyl-L-methionine = a 2'-O-methylribonucleotide in rRNA + S-adenosyl-L-homocysteine + H(+). It catalyses the reaction a ribonucleotide in U6 snRNA + S-adenosyl-L-methionine = a 2'-O-methylribonucleotide in U6 snRNA + S-adenosyl-L-homocysteine + H(+). Functionally, S-adenosyl-L-methionine-dependent methyltransferase that has the ability to methylate both RNAs and proteins. Involved in pre-rRNA processing by catalyzing the site-specific 2'-hydroxyl methylation of ribose moieties in pre-ribosomal RNA. Probably catalyzes 2'-O-methylation of U6 snRNAs in box C/D RNP complexes. U6 snRNA 2'-O-methylation is required for mRNA splicing fidelity. Also acts as a protein methyltransferase by mediating methylation of 'Gln-105' of histone H2A (H2AQ104me), a modification that impairs binding of the FACT complex and is specifically present at 35S ribosomal DNA locus. Part of the small subunit (SSU) processome, first precursor of the small eukaryotic ribosomal subunit. During the assembly of the SSU processome in the nucleolus, many ribosome biogenesis factors, an RNA chaperone and ribosomal proteins associate with the nascent pre-rRNA and work in concert to generate RNA folding, modifications, rearrangements and cleavage as well as targeted degradation of pre-ribosomal RNA by the RNA exosome. The sequence is that of rRNA 2'-O-methyltransferase fibrillarin (fbl) from Xenopus laevis (African clawed frog).